The primary structure comprises 77 residues: Sec-independent protein translocase protein TatA (77 aa).

Residues 1 to 21 (MGSFSIWHWLIVLVIVMLVFG) form a helical membrane-spanning segment. Residues 40–77 (KDGMKEGNTDEPATPTPAKELRDSTTIDVEAKEKSRQQ) form a disordered region. Basic and acidic residues predominate over residues 58-77 (KELRDSTTIDVEAKEKSRQQ).

The protein belongs to the TatA/E family. As to quaternary structure, the Tat system comprises two distinct complexes: a TatABC complex, containing multiple copies of TatA, TatB and TatC subunits, and a separate TatA complex, containing only TatA subunits. Substrates initially bind to the TatABC complex, which probably triggers association of the separate TatA complex to form the active translocon.

The protein resides in the cell inner membrane. Part of the twin-arginine translocation (Tat) system that transports large folded proteins containing a characteristic twin-arginine motif in their signal peptide across membranes. TatA could form the protein-conducting channel of the Tat system. In Cupriavidus metallidurans (strain ATCC 43123 / DSM 2839 / NBRC 102507 / CH34) (Ralstonia metallidurans), this protein is Sec-independent protein translocase protein TatA.